Here is a 202-residue protein sequence, read N- to C-terminus: Urease accessory protein UreG (202 aa).

GTP is bound at residue 11–18; that stretch reads GPVGSGKT.

This sequence belongs to the SIMIBI class G3E GTPase family. UreG subfamily. As to quaternary structure, homodimer. UreD, UreF and UreG form a complex that acts as a GTP-hydrolysis-dependent molecular chaperone, activating the urease apoprotein by helping to assemble the nickel containing metallocenter of UreC. The UreE protein probably delivers the nickel.

The protein localises to the cytoplasm. Functionally, facilitates the functional incorporation of the urease nickel metallocenter. This process requires GTP hydrolysis, probably effectuated by UreG. This chain is Urease accessory protein UreG, found in Magnetococcus marinus (strain ATCC BAA-1437 / JCM 17883 / MC-1).